The primary structure comprises 201 residues: 3-isopropylmalate dehydratase small subunit (201 aa).

The protein belongs to the LeuD family. LeuD type 1 subfamily. Heterodimer of LeuC and LeuD.

The catalysed reaction is (2R,3S)-3-isopropylmalate = (2S)-2-isopropylmalate. It functions in the pathway amino-acid biosynthesis; L-leucine biosynthesis; L-leucine from 3-methyl-2-oxobutanoate: step 2/4. Functionally, catalyzes the isomerization between 2-isopropylmalate and 3-isopropylmalate, via the formation of 2-isopropylmaleate. The protein is 3-isopropylmalate dehydratase small subunit of Shewanella frigidimarina (strain NCIMB 400).